The following is a 391-amino-acid chain: Erythronate-4-phosphate dehydrogenase (391 aa).

The substrate site is built by Ser-45 and Thr-67. Residues Asp-147 and Thr-176 each contribute to the NAD(+) site. Arg-209 is a catalytic residue. NAD(+) is bound at residue Asp-238. The active site involves Glu-243. The Proton donor role is filled by His-260. Residue Gly-263 participates in NAD(+) binding. Tyr-264 contributes to the substrate binding site.

It belongs to the D-isomer specific 2-hydroxyacid dehydrogenase family. PdxB subfamily. In terms of assembly, homodimer.

Its subcellular location is the cytoplasm. It catalyses the reaction 4-phospho-D-erythronate + NAD(+) = (R)-3-hydroxy-2-oxo-4-phosphooxybutanoate + NADH + H(+). It functions in the pathway cofactor biosynthesis; pyridoxine 5'-phosphate biosynthesis; pyridoxine 5'-phosphate from D-erythrose 4-phosphate: step 2/5. Functionally, catalyzes the oxidation of erythronate-4-phosphate to 3-hydroxy-2-oxo-4-phosphonooxybutanoate. The polypeptide is Erythronate-4-phosphate dehydrogenase (Photobacterium profundum (strain SS9)).